A 212-amino-acid chain; its full sequence is MKLFLDFLPIILFFLTFKVAEGRAEEAAAFATEHLGALVSGGVVGAAEAPVLLATVVVILATLAQVLYLKLRGQKVDTMLWVSLGLVTVMGGATIWFHSETFIKWKPSVLYWVMSAAFLLAPIVAGKDLLRAMLGGQIELPAFAWKKLNLAWAAFFAGMGVLNIWVAYNFSTSTWATFKAFGGMGLMFVFMLAQGLYMHRHMKVDGIKADES.

5 helical membrane passes run 49–69, 78–98, 105–125, 150–170, and 178–198; these read APVLLATVVVILATLAQVLYL, TMLWVSLGLVTVMGGATIWFH, WKPSVLYWVMSAAFLLAPIVA, LAWAAFFAGMGVLNIWVAYNF, and FKAFGGMGLMFVFMLAQGLYM.

Belongs to the YciB family.

It is found in the cell inner membrane. Its function is as follows. Plays a role in cell envelope biogenesis, maintenance of cell envelope integrity and membrane homeostasis. This is Inner membrane-spanning protein YciB from Leptothrix cholodnii (strain ATCC 51168 / LMG 8142 / SP-6) (Leptothrix discophora (strain SP-6)).